Consider the following 406-residue polypeptide: tRNA-specific 2-thiouridylase MnmA (406 aa).

ATP-binding positions include 6-13 (AMSGGVDS) and Leu32. Cys101 serves as the catalytic Nucleophile. The cysteines at positions 101 and 193 are disulfide-linked. Residue Gly125 participates in ATP binding. The tract at residues 143-145 (KDQ) is interaction with tRNA. Catalysis depends on Cys193, which acts as the Cysteine persulfide intermediate. The tract at residues 378–406 (GAPIEEQPAPGTVGAVDADAIEQGEDAQR) is disordered. Over residues 396–406 (DAIEQGEDAQR) the composition is skewed to acidic residues.

It belongs to the MnmA/TRMU family.

The protein resides in the cytoplasm. The catalysed reaction is S-sulfanyl-L-cysteinyl-[protein] + uridine(34) in tRNA + AH2 + ATP = 2-thiouridine(34) in tRNA + L-cysteinyl-[protein] + A + AMP + diphosphate + H(+). Catalyzes the 2-thiolation of uridine at the wobble position (U34) of tRNA, leading to the formation of s(2)U34. The chain is tRNA-specific 2-thiouridylase MnmA from Corynebacterium urealyticum (strain ATCC 43042 / DSM 7109).